The chain runs to 650 residues: Acetyl-coenzyme A synthetase (650 aa).

CoA is bound by residues 191–194, Thr311, and Asn335; that span reads RGGR. ATP-binding positions include 387–389, 411–416, Asp501, and Arg516; these read GEP and DTWWQT. Residue Ser524 coordinates CoA. ATP is bound at residue Arg527. 3 residues coordinate Mg(2+): Val538, His540, and Ile543. Arg585 is a CoA binding site. Lys610 carries the N6-acetyllysine modification.

It belongs to the ATP-dependent AMP-binding enzyme family. It depends on Mg(2+) as a cofactor. In terms of processing, acetylated. Deacetylation by the SIR2-homolog deacetylase activates the enzyme.

It carries out the reaction acetate + ATP + CoA = acetyl-CoA + AMP + diphosphate. Its function is as follows. Catalyzes the conversion of acetate into acetyl-CoA (AcCoA), an essential intermediate at the junction of anabolic and catabolic pathways. AcsA undergoes a two-step reaction. In the first half reaction, AcsA combines acetate with ATP to form acetyl-adenylate (AcAMP) intermediate. In the second half reaction, it can then transfer the acetyl group from AcAMP to the sulfhydryl group of CoA, forming the product AcCoA. This chain is Acetyl-coenzyme A synthetase, found in Vibrio parahaemolyticus serotype O3:K6 (strain RIMD 2210633).